The chain runs to 54 residues: Large ribosomal subunit protein bL33 (54 aa).

Belongs to the bacterial ribosomal protein bL33 family.

The sequence is that of Large ribosomal subunit protein bL33 from Corynebacterium glutamicum (strain R).